We begin with the raw amino-acid sequence, 533 residues long: Multicopper oxidase CueO (533 aa).

The segment at residues 1–28 is a signal peptide (tat-type signal); sequence MHRRDFLKLTAALGAATSLPLWSRAALA. Plastocyanin-like domains are found at residues 53 to 166, 221 to 290, and 416 to 532; these read QTGS…IDDS, PYPQ…DTRD, and AFNF…FTVS. The Cu cation site is built by His102, His104, His142, and His144. Residues His458, His461, His463, His514, Cys515, His516, and His520 each coordinate Cu cation.

It belongs to the multicopper oxidase family. As to quaternary structure, monomer. It depends on Cu cation as a cofactor. In terms of processing, predicted to be exported by the Tat system. The position of the signal peptide cleavage has not been experimentally proven.

It is found in the periplasm. It carries out the reaction 4 Cu(+) + O2 + 4 H(+) = 4 Cu(2+) + 2 H2O. Multicopper oxidase involved in copper homeostasis and copper tolerance under aerobic conditions. Is responsible for the oxidation of Cu(+) to the less harmful Cu(2+) in the periplasm, thereby preventing Cu(+) from entering the cytoplasm. This is Multicopper oxidase CueO (cueO) from Yersinia pestis.